The chain runs to 229 residues: Prolactin (229 aa).

The first 30 residues, 1–30 (MDKKGWSLKGSLLPLLLLVSDLLLCQSVAS), serve as a signal peptide directing secretion. Cysteines 34 and 41 form a disulfide. Phosphoserine occurs at positions 56, 64, and 120. 2 disulfides stabilise this stretch: C88-C204 and C221-C229.

This sequence belongs to the somatotropin/prolactin family. As to quaternary structure, interacts with PRLR.

The protein resides in the secreted. Its function is as follows. Prolactin acts primarily on the mammary gland by promoting lactation. The protein is Prolactin (PRL) of Ailuropoda melanoleuca (Giant panda).